The sequence spans 443 residues: Diels-Alderase poxQ (443 aa).

The first 23 residues, 1–23, serve as a signal peptide directing secretion; sequence MARIPLEFLSITLPVLLLAYCLA. Asn78, Asn97, and Asn145 each carry an N-linked (GlcNAc...) asparagine glycan.

It belongs to the Diels-Alderase family.

Its pathway is secondary metabolite biosynthesis. Functionally, diels-Alderase; part of the gene cluster that mediates the biosynthesis of oxaleimides, cytotoxic compounds containing an unusual disubstituted succinimide moiety. The first step of the pathway is provided by the HR-PKS poxF that serves in a new mode of collaborative biosynthesis with the PKS-NRPS poxE, by providing the olefin containing amino acid substrate via the synthesis of an ACP-bound dec-4-enoate. The cytochrome P450 monooxygenase poxM-catalyzed oxidation at the alpha-position creates the enzyme-bound 2-hydroxydec-4-enoyl-ACP thioester, which may be prone to spontaneous hydrolysis to yield 2-hydroxydec-4-enoic acid due to increased electrophilicity of the carbonyl. 2-hydroxydec-4-enoic acid can then be further oxidized by poxM to yield the alpha-ketoacid 2-oxodec-4-enoicacid, which is reductively aminated by the aminotransferase poxL to yield (S,E)-2-aminodec-4-enoic acid. The Hybrid PKS-NRPS synthetase poxE then performs condensation between the octaketide product of its PKS modules and the amino group of (S,E)-2-aminodec-4-enoic acid which is activated and incorporated by the adenylation domain. The resulting aminoacyl product can be cyclized by the Diels-Alderase PoxQ and reductively released by the reductive (R) domain of poxE to yield an aldehyde intermediate. The released aldehyde is then substrate for a Knoevenagel condensation by the hydrolyase poxO followed by an oxidation at the 5-position of the pyrrolidone ring. The presence of the olefin from the amino acid building block allows for migration of the substituted allyl group to occur. This allylic transposition reaction takes place in a conjugate addition, semipinacol-like fashion to yield a succinimide intermediate. Iterative two-electron oxidations of the C7 methyl of the succinimide intermediate to the carboxylic acid can be catalyzed by one of two remaining cytochrome P450 monooxygenasess poxC or poxD to yield oxaleimide A. Subsequent oxidation yields the maleimide scaffold oxaleimide I. Both oxaleimide A and oxaleimide I can undergo oxidative modifications in the decalin ring to yield the series of products oxaleimides B to H. The sequence is that of Diels-Alderase poxQ from Penicillium oxalicum (strain 114-2 / CGMCC 5302) (Penicillium decumbens).